Here is a 641-residue protein sequence, read N- to C-terminus: Calpain-6 (641 aa).

The Calpain catalytic domain occupies 26–343 (LFCDPTFLPE…FHKLNVCRNV (318 aa)). The interval 344-495 (NNPVFGRKEL…IFSEVPVQLR (152 aa)) is domain III. Residues 498 to 621 (TLDMPKMSCW…YLRKKGGPTA (124 aa)) form the C2 domain.

The protein belongs to the peptidase C2 family. As to quaternary structure, interacts (via domain III) with microtubules. Interacts (via domain II) with ARHGEF2 (via the N-terminal zinc finger).

Its subcellular location is the cytoplasm. It localises to the perinuclear region. The protein localises to the cytoskeleton. The protein resides in the spindle. In terms of biological role, microtubule-stabilizing protein that may be involved in the regulation of microtubule dynamics and cytoskeletal organization. May act as a regulator of RAC1 activity through interaction with ARHGEF2 to control lamellipodial formation and cell mobility. Does not seem to have protease activity as it has lost the active site residues. This is Calpain-6 (Capn6) from Mus musculus (Mouse).